We begin with the raw amino-acid sequence, 327 residues long: uncharacterized protein (327 aa).

Residues 12 to 79 (KRIDEFLAKE…LKKELDLEIE (68 aa)) form the S4 RNA-binding domain. The active site involves D136.

Belongs to the pseudouridine synthase RluA family.

The enzyme catalyses a uridine in RNA = a pseudouridine in RNA. This is an uncharacterized protein from Helicobacter pylori (strain J99 / ATCC 700824) (Campylobacter pylori J99).